We begin with the raw amino-acid sequence, 644 residues long: Chaperone protein HtpG (644 aa).

The interval 1–352 is a; substrate-binding; that stretch reads MNARVEQLEF…AQDMSLNVSR (352 aa). The interval 353-566 is b; that stretch reads EILQQDRQIK…AFGITPALAR (214 aa). The c stretch occupies residues 567 to 644; that stretch reads LYRASGQDIP…ILADRLARTL (78 aa).

This sequence belongs to the heat shock protein 90 family. Homodimer.

Its subcellular location is the cytoplasm. Molecular chaperone. Has ATPase activity. This Mycolicibacterium paratuberculosis (strain ATCC BAA-968 / K-10) (Mycobacterium paratuberculosis) protein is Chaperone protein HtpG.